A 470-amino-acid chain; its full sequence is 3-isopropylmalate dehydratase large subunit (470 aa).

Residues cysteine 346, cysteine 406, and cysteine 409 each coordinate [4Fe-4S] cluster.

This sequence belongs to the aconitase/IPM isomerase family. LeuC type 1 subfamily. In terms of assembly, heterodimer of LeuC and LeuD. It depends on [4Fe-4S] cluster as a cofactor.

It catalyses the reaction (2R,3S)-3-isopropylmalate = (2S)-2-isopropylmalate. It participates in amino-acid biosynthesis; L-leucine biosynthesis; L-leucine from 3-methyl-2-oxobutanoate: step 2/4. In terms of biological role, catalyzes the isomerization between 2-isopropylmalate and 3-isopropylmalate, via the formation of 2-isopropylmaleate. In Shouchella clausii (strain KSM-K16) (Alkalihalobacillus clausii), this protein is 3-isopropylmalate dehydratase large subunit.